Consider the following 486-residue polypeptide: H2.0-like homeobox protein (486 aa).

Disordered regions lie at residues 83–173 (ASFQ…SSKD) and 330–486 (KWRH…LGGL). A compositionally biased stretch (low complexity) spans 125–135 (QQQQQQQQPQQ). Residues 276–335 (RSWSRAVFSNLQRKGLEKRFEIQKYVTKPDRKQLAAMLGLTDAQVKVWFQNRRMKWRHSK) constitute a DNA-binding region (homeobox). 2 stretches are compositionally biased toward basic and acidic residues: residues 334–349 (SKEA…EAGE) and 363–372 (EERSPSRSEG). Over residues 373-383 (EAESESSDPES) the composition is skewed to acidic residues. Positions 390–401 (DTERTEGTERSL) are enriched in basic and acidic residues. The span at 409-420 (ASAAGALLAASS) shows a compositional bias: low complexity. Gly residues predominate over residues 421 to 440 (GGSGGSGGGGGGGFNFGGLS). Residues 441 to 474 (SGSTTSAGSSGSHSSGGASELLPAPQPSLSSAPK) are compositionally biased toward low complexity. Residues 475–486 (SPEPVPAPLGGL) show a composition bias toward pro residues.

This sequence belongs to the H2.0 homeobox family.

The protein localises to the nucleus. Functionally, transcription factor required for TBX21/T-bet-dependent maturation of Th1 cells as well as maintenance of Th1-specific gene expression. Involved in embryogenesis and hematopoiesis. This is H2.0-like homeobox protein (HLX) from Bos taurus (Bovine).